The sequence spans 672 residues: Zinc finger protein 271 (672 aa).

The disordered stretch occupies residues 1–29 (MEIQFNYESQEHHLLSDGENKTKIGKPAS). Over residues 9 to 22 (SQEHHLLSDGENKT) the composition is skewed to basic and acidic residues. The segment at 80–102 (HNCDEYGQSFVWNTGLFRHRKTH) adopts a C2H2-type 1; degenerate zinc-finger fold. 19 C2H2-type zinc fingers span residues 107 to 129 (YECD…QRIH), 135 to 157 (YSCN…QRVH), 163 to 185 (YKCD…QRIH), 191 to 213 (YQCS…QRIH), 219 to 241 (YTCN…QRIH), 247 to 269 (YKCD…QRIH), 275 to 297 (YPCN…RRIH), 303 to 325 (YKCN…QRIH), 331 to 353 (YPCD…QRIH), 359 to 381 (YPCN…HRIH), 387 to 409 (YECD…QRIH), 415 to 437 (YPCS…QRIH), 443 to 465 (YACN…QRVH), 471 to 493 (YHCN…QRIH), 499 to 521 (YLCT…QRIH), 527 to 549 (YKCS…QRIH), 555 to 577 (NPCN…QKIH), 583 to 605 (YKCD…QKIH), and 611 to 633 (YRCV…EEVH).

Belongs to the krueppel C2H2-type zinc-finger protein family.

It is found in the nucleus. In terms of biological role, may be involved in transcriptional regulation. This chain is Zinc finger protein 271 (ZNF271), found in Pongo abelii (Sumatran orangutan).